The primary structure comprises 440 residues: Xylose isomerase (440 aa).

Residues H100 and D103 contribute to the active site. The Mg(2+) site is built by E231, E267, H270, D295, D306, D308, and D338.

This sequence belongs to the xylose isomerase family. As to quaternary structure, homotetramer. Mg(2+) is required as a cofactor.

It localises to the cytoplasm. The catalysed reaction is alpha-D-xylose = alpha-D-xylulofuranose. This Burkholderia vietnamiensis (strain G4 / LMG 22486) (Burkholderia cepacia (strain R1808)) protein is Xylose isomerase.